Consider the following 332-residue polypeptide: 2,3-diketo-L-gulonate reductase (332 aa).

His-44 functions as the Proton donor in the catalytic mechanism. NAD(+) contacts are provided by residues 168–174, 224–225, and 304–306; these read ITMVDMS, WK, and GHE.

The protein belongs to the LDH2/MDH2 oxidoreductase family. DlgD subfamily. In terms of assembly, homodimer.

It is found in the cytoplasm. The enzyme catalyses 3-dehydro-L-gulonate + NAD(+) = 2,3-dioxo-L-gulonate + NADH + H(+). It catalyses the reaction 3-dehydro-L-gulonate + NADP(+) = 2,3-dioxo-L-gulonate + NADPH + H(+). Functionally, catalyzes the reduction of 2,3-diketo-L-gulonate in the presence of NADH, to form 3-keto-L-gulonate. The protein is 2,3-diketo-L-gulonate reductase of Escherichia coli O1:K1 / APEC.